The sequence spans 340 residues: Methionine import ATP-binding protein MetN (340 aa).

Residues 8–246 enclose the ABC transporter domain; the sequence is ISVKNLNKEI…PYSSITEELF (239 aa). 40 to 47 contributes to the ATP binding site; that stretch reads GHSGSGKS.

This sequence belongs to the ABC transporter superfamily. Methionine importer (TC 3.A.1.24) family. As to quaternary structure, the complex is composed of two ATP-binding proteins (MetN), two transmembrane proteins (MetI) and a solute-binding protein (MetQ).

It is found in the cell inner membrane. It catalyses the reaction L-methionine(out) + ATP + H2O = L-methionine(in) + ADP + phosphate + H(+). It carries out the reaction D-methionine(out) + ATP + H2O = D-methionine(in) + ADP + phosphate + H(+). Part of the ABC transporter complex MetNIQ involved in methionine import. Responsible for energy coupling to the transport system. This Chlamydia felis (strain Fe/C-56) (Chlamydophila felis) protein is Methionine import ATP-binding protein MetN.